Reading from the N-terminus, the 630-residue chain is Kelch-like protein 14 (630 aa).

One can recognise a BTB domain in the interval 33 to 153; the sequence is CDVTLTAQGQ…LYTANVTLSL (121 aa). The segment at 69–117 is disordered; sequence GGGVGGQDGLGAPKDQQQQQQPQQQPPQQQQPPPQEEPGTPSSSPDDKL. The segment covering 84–96 has biased composition (low complexity); that stretch reads QQQQQQPQQQPPQ. The 70-residue stretch at 212-281 folds into the BACK domain; the sequence is VEDVLLLNFE…PAPELVERVQ (70 aa). 6 Kelch repeats span residues 325–374, 375–426, 427–473, 475–520, 522–572, and 574–622; these read MLLL…EVEN, FLFV…RLDK, HLYV…VHNG, IYIS…VMND, LYAI…VLDD, and IYLV…TVIL.

As to quaternary structure, interacts with TOR1A. Expressed in the brain, primarily in neurons. In the cerebral cortex, mostly expressed in layers I and II (at protein level). Also observed in some neurons of the corpus striatum (at protein level). Expressed at high levels in the hippocampus, including in pyramidal cells of the CA1 and CA3 layers (at protein level). In the cerebellum, expression in Purkinje cells is higher than in granular cells (at protein level). Also detected in the medial septum, ventral pallidum, thalamus, hypothalamus, amygdala, inferior colliculi, locus caeruleus, peripyramidal nucleus, raphe nucleus, reticular formation, spinal trigeminal nucleus, and vestibular nuclei (at protein level). Low expression, if any, in glial cells (at protein level). Not observed in the corpus callosum.

It is found in the cytoplasm. The protein resides in the cytosol. It localises to the endoplasmic reticulum membrane. The sequence is that of Kelch-like protein 14 (Klhl14) from Mus musculus (Mouse).